The sequence spans 226 residues: Ribonuclease 3 (226 aa).

Residues 6–128 (INRLQRKLGY…LIGGVFLDSD (123 aa)) form the RNase III domain. Glu41 serves as a coordination point for Mg(2+). Residue Asp45 is part of the active site. Asp114 and Glu117 together coordinate Mg(2+). Glu117 is a catalytic residue. The region spanning 155-225 (DPKTRLQEYL…AEQALKMLEL (71 aa)) is the DRBM domain.

It belongs to the ribonuclease III family. Homodimer. The cofactor is Mg(2+).

The protein resides in the cytoplasm. It catalyses the reaction Endonucleolytic cleavage to 5'-phosphomonoester.. Its function is as follows. Digests double-stranded RNA. Involved in the processing of primary rRNA transcript to yield the immediate precursors to the large and small rRNAs (23S and 16S). Processes some mRNAs, and tRNAs when they are encoded in the rRNA operon. Processes pre-crRNA and tracrRNA of type II CRISPR loci if present in the organism. This Enterobacter sp. (strain 638) protein is Ribonuclease 3.